Reading from the N-terminus, the 179-residue chain is Large ribosomal subunit protein uL6 (179 aa).

This sequence belongs to the universal ribosomal protein uL6 family. In terms of assembly, part of the 50S ribosomal subunit.

Functionally, this protein binds to the 23S rRNA, and is important in its secondary structure. It is located near the subunit interface in the base of the L7/L12 stalk, and near the tRNA binding site of the peptidyltransferase center. The sequence is that of Large ribosomal subunit protein uL6 from Rippkaea orientalis (strain PCC 8801 / RF-1) (Cyanothece sp. (strain PCC 8801)).